The chain runs to 350 residues: Galactokinase (350 aa).

Residue glutamate 14–aspartate 17 coordinates substrate. ATP-binding positions include serine 46 and glycine 96–serine 102. 2 residues coordinate Mg(2+): serine 102 and glutamate 134. The active-site Proton acceptor is the aspartate 146. Tyrosine 196 lines the substrate pocket.

Belongs to the GHMP kinase family. GalK subfamily.

It is found in the cytoplasm. The catalysed reaction is alpha-D-galactose + ATP = alpha-D-galactose 1-phosphate + ADP + H(+). It functions in the pathway carbohydrate metabolism; galactose metabolism. In terms of biological role, catalyzes the transfer of the gamma-phosphate of ATP to D-galactose to form alpha-D-galactose-1-phosphate (Gal-1-P). This Thermotoga petrophila (strain ATCC BAA-488 / DSM 13995 / JCM 10881 / RKU-1) protein is Galactokinase.